A 504-amino-acid polypeptide reads, in one-letter code: Galactokinase (504 aa).

4 residues coordinate alpha-D-galactose: R47, D53, H54, and D56. Residues G150, G152, S154, and S155 each contribute to the ATP site. 2 residues coordinate alpha-D-galactose: N196 and D200. Residue D200 is the Proton acceptor of the active site. S244, N245, and K246 together coordinate ATP. Y254 is a binding site for alpha-D-galactose.

This sequence belongs to the GHMP kinase family. GalK subfamily.

It carries out the reaction alpha-D-galactose + ATP = alpha-D-galactose 1-phosphate + ADP + H(+). It functions in the pathway carbohydrate metabolism; galactose metabolism. Its function is as follows. Galactokinase is a key enzyme in the galactose metabolism where it catalyzes the conversion of alpha-D-galactose to galactose 1-phosphate. Can also induce the transcription of the gal genes in response to the organism being challenged with galactose as the sole source of carbon. This Candida parapsilosis (Yeast) protein is Galactokinase.